A 425-amino-acid chain; its full sequence is Tryptophan synthase beta chain (425 aa).

Lysine 107 is subject to N6-(pyridoxal phosphate)lysine.

This sequence belongs to the TrpB family. As to quaternary structure, tetramer of two alpha and two beta chains. Pyridoxal 5'-phosphate serves as cofactor.

It carries out the reaction (1S,2R)-1-C-(indol-3-yl)glycerol 3-phosphate + L-serine = D-glyceraldehyde 3-phosphate + L-tryptophan + H2O. It participates in amino-acid biosynthesis; L-tryptophan biosynthesis; L-tryptophan from chorismate: step 5/5. Functionally, the beta subunit is responsible for the synthesis of L-tryptophan from indole and L-serine. The sequence is that of Tryptophan synthase beta chain from Synechococcus sp. (strain JA-2-3B'a(2-13)) (Cyanobacteria bacterium Yellowstone B-Prime).